The following is a 194-amino-acid chain: Adenine phosphoribosyltransferase (194 aa).

Belongs to the purine/pyrimidine phosphoribosyltransferase family. Homodimer.

It localises to the cytoplasm. The enzyme catalyses AMP + diphosphate = 5-phospho-alpha-D-ribose 1-diphosphate + adenine. The protein operates within purine metabolism; AMP biosynthesis via salvage pathway; AMP from adenine: step 1/1. Its function is as follows. Catalyzes a salvage reaction resulting in the formation of AMP, that is energically less costly than de novo synthesis. In Albidiferax ferrireducens (strain ATCC BAA-621 / DSM 15236 / T118) (Rhodoferax ferrireducens), this protein is Adenine phosphoribosyltransferase.